The primary structure comprises 91 residues: Defensin-like protein 220 (91 aa).

The first 19 residues, 1 to 19 (MKTIFFFITFIVLVSSCTS), serve as a signal peptide directing secretion. 3 disulfides stabilise this stretch: Cys-61/Cys-78, Cys-64/Cys-83, and Cys-68/Cys-85.

This sequence belongs to the DEFL family.

Its subcellular location is the secreted. The protein is Defensin-like protein 220 of Arabidopsis thaliana (Mouse-ear cress).